The following is a 1331-amino-acid chain: ABC multidrug transporter MDR2 (1331 aa).

2 stretches are compositionally biased toward basic and acidic residues: residues 1–20 (MVEV…KQEN) and 31–41 (SDKEKVAKKGN). The tract at residues 1-51 (MVEVSEKPNTQDDGVSKQENRNPASSSSSTSDKEKVAKKGNSDATKSSTPE) is disordered. The next 4 helical transmembrane spans lie at 93–113 (MIFL…LPLF), 147–167 (YFVY…VGFI), 219–239 (KVGL…IGYV), and 242–262 (WKLA…MGGI). The ABC transmembrane type-1 1 domain maps to 97–387 (AIVSLASIAA…VAPNTQAFAS (291 aa)). The N-linked (GlcNAc...) asparagine glycan is linked to N293. Helical transmembrane passes span 325–345 (LGIM…LGFW) and 358–378 (LSAI…IGNV). The region spanning 422–667 (IEFRGIKHIY…KGTYLQLVEA (246 aa)) is the ABC transporter 1 domain. 457–464 (GPSGSGKS) contacts ATP. N529 is a glycosylation site (N-linked (GlcNAc...) asparagine). 2 helical membrane passes run 762 to 782 (LCGF…SVFF) and 810 to 830 (FLML…IFAI). One can recognise an ABC transmembrane type-1 2 domain in the interval 764-1051 (GFFFAVLSGA…VFSFSPDMGK (288 aa)). The N-linked (GlcNAc...) asparagine glycan is linked to N860. A run of 4 helical transmembrane segments spans residues 884–904 (LGTI…ALAF), 910–930 (LVCI…FWIL), 995–1015 (ASQS…GGLL), and 1025–1045 (FFLC…VFSF). In terms of domain architecture, ABC transporter 2 spans 1086–1324 (IEFRDVHFRY…KGRYYELVHM (239 aa)). An N-linked (GlcNAc...) asparagine glycan is attached at N1108. Residue 1121-1128 (GPSGCGKS) coordinates ATP.

It belongs to the ABC transporter superfamily. ABCB family. Multidrug resistance exporter (TC 3.A.1.201) subfamily.

The protein localises to the cell membrane. The catalysed reaction is itraconazole(in) + ATP + H2O = itraconazole(out) + ADP + phosphate + H(+). Its function is as follows. Pleiotropic ABC efflux transporter that may be involved in the modulation susceptibility to a wide range of unrelated cytotoxic compounds, including terbinafine, 4-nitroquinoline N-oxide, and ethidium bromide. May play a role in pathogenicity. The protein is ABC multidrug transporter MDR2 of Trichophyton interdigitale (strain MR816).